The primary structure comprises 688 residues: MATSSHQGAAAGSQMEHRLCETSIGQGERPRASRGQESNFKQSQGTSTLRLLLLGKQGAGKSATGNTILGKAVFESRFSHHMVTKRCQSESVSVRGKQVIVIDTPDLFSSLGCPEVQQQNLRQCLDLLADPYVLLLVTPIGHSTEEDKKTIEGIQGVFGPQAYRHMIVVFTREDELGEDTLQNHIESKKYLKKLIENIGSQRCCAFNNKADKKQQELQVSQFLDAIEFLMMESPGTYFEPLKTENSGVQGCGTGVTYKGDNLCGSKKRQPQITGPGWDRDTPELRVLLMGKRGVGKSAAGNSILGKQVFKTQFSEKQRVTEAFASHSRLWNQKKFLIIDSPEISSWKLDESDVKEHTFPGPHAFLLVTPLGSSLKSGDSVFSIIKRIFGEKFIKFTIILFTRKEDFEGQDLDTFTKENDALCNLIQIFEGRYAVFNYRATVEEEQSQVGKLLSQIESVVQHHNNKPCVIREKELLNIILLGRSGVGKSATGNTILGRPAFVSQLRAQPVTSRSQSGRRTLDWQDIVVVDTPSLNQMSGTEKNPAQLKKEIKQCLLQNCEEGMKVFVLVFQLGRFTQEDEAVVEQLEASFEENIMKYMIVLFTRKEDLGDGDLYDFTNNTKNKVLKRIFKKCKGRVCAFNNKETGEDQETQVKALLTIANDLKRSYDEHSTSWMDQLKSAVGQITTVFK.

The segment at 22–44 (TSIGQGERPRASRGQESNFKQSQ) is disordered. The segment covering 35–44 (GQESNFKQSQ) has biased composition (polar residues). AIG1-type G domains lie at 46 to 246 (TSTL…TENS), 281 to 471 (TPEL…VIRE), and 472 to 681 (KELL…SAVG). The interval 55–62 (GKQGAGKS) is G1. GTP contacts are provided by residues 55 to 63 (GKQGAGKSA) and Ser76. Residues 82–86 (MVTKR) are G2. Residues 103 to 106 (DTPD) are G3. The interval 171 to 174 (TRED) is G4. GTP contacts are provided by residues 172–174 (RED) and Asn208. The G5 stretch occupies residues 207–209 (NNK).

It belongs to the TRAFAC class TrmE-Era-EngA-EngB-Septin-like GTPase superfamily. AIG1/Toc34/Toc159-like paraseptin GTPase family. IAN subfamily. Spleen, thymus and T-cells. Greatly reduced in T-cells from lymphopenic rats.

The protein resides in the endoplasmic reticulum. It is found in the golgi apparatus. The protein localises to the mitochondrion. It localises to the cytoplasm. Its subcellular location is the cytosol. Its function is as follows. Exerts an anti-apoptotic effect in the immune system and is involved in responses to infections. The polypeptide is GTPase IMAP family member 8 (Gimap8) (Rattus norvegicus (Rat)).